Here is a 205-residue protein sequence, read N- to C-terminus: MSSTRLETLALCLQNVLADKLANVDQQLDQLIITVSPVNLLPVMSVLRDHPELGFEMLIDLCGVDYSIYGVEPTSEQGREGKRFAVVYHLLSIRHNRRVRVKAFPEDDEFPVVVSVIDIWPSANWFEREAFDLYGIVFTGHPDLRRILTDYGFIGNPFRKDFPLSGNVEMRYDPDQQRVVYQPVTIEPRQITPRVIREEHYGDSE.

Belongs to the complex I 30 kDa subunit family. As to quaternary structure, NDH-1 is composed of 14 different subunits. Subunits NuoB, C, D, E, F, and G constitute the peripheral sector of the complex.

Its subcellular location is the cell inner membrane. The catalysed reaction is a quinone + NADH + 5 H(+)(in) = a quinol + NAD(+) + 4 H(+)(out). Its function is as follows. NDH-1 shuttles electrons from NADH, via FMN and iron-sulfur (Fe-S) centers, to quinones in the respiratory chain. The immediate electron acceptor for the enzyme in this species is believed to be ubiquinone. Couples the redox reaction to proton translocation (for every two electrons transferred, four hydrogen ions are translocated across the cytoplasmic membrane), and thus conserves the redox energy in a proton gradient. This Nitrosospira multiformis (strain ATCC 25196 / NCIMB 11849 / C 71) protein is NADH-quinone oxidoreductase subunit C.